The sequence spans 694 residues: Methionine--tRNA ligase (694 aa).

A 'HIGH' region motif is present at residues 12–22 (PYANGPLHLGH). The Zn(2+) site is built by cysteine 143, cysteine 146, cysteine 156, and cysteine 159. The 'KMSKS' region motif lies at 330 to 334 (KMSKS). ATP is bound at residue lysine 333. The segment covering 550-573 (MAAPAAPATTTKPAPSKADAKPAA) has biased composition (low complexity). The segment at 550 to 582 (MAAPAAPATTTKPAPSKADAKPAAVANPESQTT) is disordered. One can recognise a tRNA-binding domain in the interval 591–694 (DFAKLDLRIG…SGAQPGMPVR (104 aa)).

Belongs to the class-I aminoacyl-tRNA synthetase family. MetG type 1 subfamily. In terms of assembly, homodimer. It depends on Zn(2+) as a cofactor.

Its subcellular location is the cytoplasm. It carries out the reaction tRNA(Met) + L-methionine + ATP = L-methionyl-tRNA(Met) + AMP + diphosphate. Is required not only for elongation of protein synthesis but also for the initiation of all mRNA translation through initiator tRNA(fMet) aminoacylation. The polypeptide is Methionine--tRNA ligase (Xanthomonas euvesicatoria pv. vesicatoria (strain 85-10) (Xanthomonas campestris pv. vesicatoria)).